The primary structure comprises 158 residues: Phosphopantetheine adenylyltransferase (158 aa).

Threonine 10 provides a ligand contact to substrate. ATP is bound by residues 10 to 11 (TF) and histidine 18. Residues lysine 42, leucine 74, and arginine 88 each coordinate substrate. ATP contacts are provided by residues 89–91 (GLR), glutamate 99, and 124–130 (YSFISSS).

This sequence belongs to the bacterial CoaD family. As to quaternary structure, homohexamer. Mg(2+) is required as a cofactor.

It localises to the cytoplasm. It catalyses the reaction (R)-4'-phosphopantetheine + ATP + H(+) = 3'-dephospho-CoA + diphosphate. It participates in cofactor biosynthesis; coenzyme A biosynthesis; CoA from (R)-pantothenate: step 4/5. Its function is as follows. Reversibly transfers an adenylyl group from ATP to 4'-phosphopantetheine, yielding dephospho-CoA (dPCoA) and pyrophosphate. This Erwinia tasmaniensis (strain DSM 17950 / CFBP 7177 / CIP 109463 / NCPPB 4357 / Et1/99) protein is Phosphopantetheine adenylyltransferase.